Here is a 123-residue protein sequence, read N- to C-terminus: Ribosome-binding factor A (123 aa).

Belongs to the RbfA family. As to quaternary structure, monomer. Binds 30S ribosomal subunits, but not 50S ribosomal subunits or 70S ribosomes.

The protein resides in the cytoplasm. In terms of biological role, one of several proteins that assist in the late maturation steps of the functional core of the 30S ribosomal subunit. Associates with free 30S ribosomal subunits (but not with 30S subunits that are part of 70S ribosomes or polysomes). Required for efficient processing of 16S rRNA. May interact with the 5'-terminal helix region of 16S rRNA. The protein is Ribosome-binding factor A of Geotalea daltonii (strain DSM 22248 / JCM 15807 / FRC-32) (Geobacter daltonii).